Here is a 311-residue protein sequence, read N- to C-terminus: MQNYKYDKAIVPESKNGGSPALNNNPRRSGSKRVLLICLDLFCLFMAGLPFLIIETSTIKPYHRGFYCNDESIKYPLKTGETINDAVLCAVGIVIAILAIITGEFYRIYYLKKSRSTIQNPYVAALYKQVGCFLFGCAISQSFTDIAKVSIGRLRPHFLSVCNPDFSQINCSEGYIQNYRCRGDDSKVQEARKSFFSGHASFSMYTMLYLVLYLQARFTWRGARLLRPLLQFTLIMMAFYTGLSRVSDHKHHPSDVLAGFAQGALVACCIVFFVSDLFKTKTTLSLPAPAIRKEILSPVDIIDRNNHHNMM.

The Cytoplasmic segment spans residues 1-33 (MQNYKYDKAIVPESKNGGSPALNNNPRRSGSKR). S19 carries the post-translational modification Phosphoserine. A helical transmembrane segment spans residues 34-54 (VLLICLDLFCLFMAGLPFLII). Topologically, residues 55–85 (ETSTIKPYHRGFYCNDESIKYPLKTGETIND) are extracellular. A helical transmembrane segment spans residues 86–106 (AVLCAVGIVIAILAIITGEFY). At 107-122 (RIYYLKKSRSTIQNPY) the chain is on the cytoplasmic side. Residues 109–110 (YY) carry the Dityrosine basolateral targeting motif motif. The chain crosses the membrane as a helical span at residues 123 to 143 (VAALYKQVGCFLFGCAISQSF). The Extracellular portion of the chain corresponds to 144–193 (TDIAKVSIGRLRPHFLSVCNPDFSQINCSEGYIQNYRCRGDDSKVQEARK). A phosphatase sequence motif I region spans residues 148-156 (KVSIGRLRP). N-linked (GlcNAc...) asparagine glycosylation occurs at N170. An Integrin-binding motif motif is present at residues 182 to 184 (RGD). The helical transmembrane segment at 194–214 (SFFSGHASFSMYTMLYLVLYL) threads the bilayer. The segment at 196-199 (FSGH) is phosphatase sequence motif II. H199 serves as the catalytic Proton donors. The Cytoplasmic segment spans residues 215–225 (QARFTWRGARL). A helical transmembrane segment spans residues 226 to 243 (LRPLLQFTLIMMAFYTGL). The tract at residues 244 to 255 (SRVSDHKHHPSD) is phosphatase sequence motif III. Residues 244 to 257 (SRVSDHKHHPSDVL) lie on the Extracellular side of the membrane. Residue H251 is the Nucleophile of the active site. Residues 258–278 (AGFAQGALVACCIVFFVSDLF) form a helical membrane-spanning segment. A mediates interaction with CTNND1 region spans residues 275 to 311 (SDLFKTKTTLSLPAPAIRKEILSPVDIIDRNNHHNMM). The Cytoplasmic portion of the chain corresponds to 279-311 (KTKTTLSLPAPAIRKEILSPVDIIDRNNHHNMM).

Belongs to the PA-phosphatase related phosphoesterase family. In terms of assembly, forms functional homodimers and homooligomers that are not required for substrate recognition and catalytic activity. Can also form heterooligomers with other PLPP2 and PLPP3. Interacts with CTNND1; negatively regulates the PLPP3-mediated stabilization of beta-catenin/CTNNB1. N-glycosylated. Contains high-mannose oligosaccharides. In terms of tissue distribution, ubiquitously expressed. Highly expressed in heart and placenta.

It localises to the cell membrane. It is found in the basolateral cell membrane. The protein localises to the endoplasmic reticulum membrane. Its subcellular location is the endoplasmic reticulum-Golgi intermediate compartment membrane. The protein resides in the golgi apparatus membrane. It localises to the golgi apparatus. It is found in the trans-Golgi network membrane. The protein localises to the membrane raft. The catalysed reaction is a 1,2-diacyl-sn-glycero-3-phosphate + H2O = a 1,2-diacyl-sn-glycerol + phosphate. The enzyme catalyses 1,2-dihexadecanoyl-sn-glycero-3-phosphate + H2O = 1,2-dihexadecanoyl-sn-glycerol + phosphate. It catalyses the reaction 1,2-di-(9Z-octadecenoyl)-sn-glycero-3-phosphate + H2O = 1,2-di-(9Z-octadecenoyl)-sn-glycerol + phosphate. It carries out the reaction a monoacyl-sn-glycero-3-phosphate + H2O = a monoacylglycerol + phosphate. The catalysed reaction is (9Z)-octadecenoyl-sn-glycero-3-phosphate + H2O = (9Z-octadecenoyl)-glycerol + phosphate. The enzyme catalyses sphing-4-enine 1-phosphate + H2O = sphing-4-enine + phosphate. It catalyses the reaction an N-acylsphing-4-enine 1-phosphate + H2O = an N-acylsphing-4-enine + phosphate. It carries out the reaction N-(octanoyl)-sphing-4-enine-1-phosphate + H2O = N-octanoylsphing-4-enine + phosphate. The catalysed reaction is N-(9Z-octadecenoyl)-ethanolamine phosphate + H2O = N-(9Z-octadecenoyl) ethanolamine + phosphate. The protein operates within lipid metabolism; phospholipid metabolism. With respect to regulation, magnesium-independent phospholipid phosphatase. Insensitive to N-ethylmaleimide. Inhibited by sphingosine, zinc ions and modestly by propanolol. In terms of biological role, magnesium-independent phospholipid phosphatase of the plasma membrane that catalyzes the dephosphorylation of a variety of glycerolipid and sphingolipid phosphate esters including phosphatidate/PA, lysophosphatidate/LPA, diacylglycerol pyrophosphate/DGPP, sphingosine 1-phosphate/S1P and ceramide 1-phosphate/C1P. Also acts on N-oleoyl ethanolamine phosphate/N-(9Z-octadecenoyl)-ethanolamine phosphate, a potential physiological compound. Has both an extracellular and an intracellular phosphatase activity, allowing the hydrolysis and the cellular uptake of these bioactive lipid mediators from the milieu, regulating signal transduction in different cellular processes. Through the dephosphorylation of extracellular sphingosine-1-phosphate and the regulation of its extra- and intracellular availability, plays a role in vascular homeostasis, regulating endothelial cell migration, adhesion, survival, proliferation and the production of pro-inflammatory cytokines. By maintaining the appropriate levels of this lipid in the cerebellum, also ensure its proper development and function. Through its intracellular lipid phosphatase activity may act in early compartments of the secretory pathway, regulating the formation of Golgi to endoplasmic reticulum retrograde transport carriers. Functionally, independently of this phosphatase activity may also function in the Wnt signaling pathway and the stabilization of beta-catenin/CTNNB1, thereby regulating cell proliferation, migration and differentiation in angiogenesis or yet in tumor growth. Also plays a role in integrin-mediated cell-cell adhesion in angiogenesis. This is Phospholipid phosphatase 3 from Homo sapiens (Human).